Consider the following 450-residue polypeptide: Zinc finger protein 277 (450 aa).

At Ala2 the chain carries N-acetylalanine. C2H2-type zinc fingers lie at residues 224–248 and 355–381; these read LQCL…KKQH and HQCR…ETKH.

Belongs to the ZNF277 family. Interacts (via zinc-finger domains) with RPS2/40S ribosomal protein S2, perhaps as nascent RPS2 is synthesized during translation; the interaction is direct; the interaction is extra-ribosomal. Interaction with RPS2 competes with the binding of RPS2 to protein arginine methyltransferase PRMT3. Interacts with Polycomb group (PcG) complex protein BMI1. May be part of a complex including at least ZNF277, BMI1 and RNF2/RING2.

Its subcellular location is the nucleus. In terms of biological role, probable transcription factor. Involved in modulation of cellular senescence; represses transcription of the tumor suppressor gene INK4A/ARF, perhaps acting via the Polycomb group (PcG) complex PRC1. This Homo sapiens (Human) protein is Zinc finger protein 277 (ZNF277).